We begin with the raw amino-acid sequence, 372 residues long: MNDKKELKLILVAARNQLSSNDIKCLIAYLESDDCEFETSLQISEPKEQPELLELHRLVAIPALIKVSPAPKQIFAGSNIFSQLQKWLPRWSQEGLTKNLGINLQPSKIDSTRTQKEFLLEDELLVLRQENETLTKRIESQERLLRMVAHELRTPLTAATLAVQSQKLGQIDISKLQEVIKRRLEEIELLSQDLLEVGTTKWEALFNPQKIDLGNISAEVILELEKFWRIRNIEIDTDIPSDLPSVFADQRRMRQVFLNLIENAIKFSKDSGSIKITMIHKTNQWVEITICDKGAGIPLSEQKRIFLDRVRLPQTSEGTSGFGIGLSVCRRIVQVHGGRIWVVSEVGVGSCFHFTVPVWQGQNKEQQNLTKG.

Residues 147-360 (MVAHELRTPL…CFHFTVPVWQ (214 aa)) form the Histidine kinase domain. The residue at position 150 (His150) is a Phosphohistidine; by autocatalysis.

Homooligomerizes. Interacts with KaiC. Participates in the KaiBC complex, whose core is composed of a KaiC homohexamer and 6 KaiB.

The catalysed reaction is ATP + protein L-histidine = ADP + protein N-phospho-L-histidine.. Member of the two-component regulatory system SasA/RpaA involved in genome-wide circadian gene expression. One of several clock output pathways. Participates in the Kai clock protein complex, the main circadian regulator in cyanobacteria, via its interaction with KaiC. KaiC enhances the autophosphorylation activity of SasA, which then transfers its phosphate group to RpaA to activate it. In addition to its output function, recruits fold-shifted KaiB (KaiB(fs)) to KaiC to cooperatively form the KaiB(6):KaiC(6) complex (independent of SasA kinase activity). Required for robustness of the circadian rhythm of gene expression and is involved in clock output, also required for adaptation to light/dark cycles. This chain is Adaptive-response sensory kinase SasA, found in Prochlorococcus marinus (strain AS9601).